A 93-amino-acid polypeptide reads, in one-letter code: MIVIVAYDISDEDRRGRLRRYLRRLGLARVNRSVYAGPGTATTAELVAERAKEIVEEGDSVFVIVVREDEYQRAHVFDGRDYYIVSERKYEVY.

Aspartate 8 contacts Mg(2+).

It belongs to the CRISPR-associated endoribonuclease Cas2 protein family. As to quaternary structure, homodimer, forms a heterotetramer with a Cas1 homodimer. Mg(2+) serves as cofactor.

Functionally, CRISPR (clustered regularly interspaced short palindromic repeat), is an adaptive immune system that provides protection against mobile genetic elements (viruses, transposable elements and conjugative plasmids). CRISPR clusters contain sequences complementary to antecedent mobile elements and target invading nucleic acids. CRISPR clusters are transcribed and processed into CRISPR RNA (crRNA). Functions as a ssRNA-specific endoribonuclease. Involved in the integration of spacer DNA into the CRISPR cassette. This chain is CRISPR-associated endoribonuclease Cas2, found in Thermofilum pendens (strain DSM 2475 / Hrk 5).